The sequence spans 2069 residues: Dedicator of cytokinesis protein 9 (2069 aa).

Ser21, Ser32, Ser167, and Ser170 each carry phosphoserine. A PH domain is found at 174–281 (GITKHGWLYK…WITILNKILQ (108 aa)). The tract at residues 290–313 (EKRNGDSHEDDEQSKLEGSGSGLD) is disordered. Phosphoserine is present on residues Ser433 and Ser443. The C2 DOCK-type domain maps to 640–818 (TNHLYVYPKY…PLLKISTHLV (179 aa)). A phosphoserine mark is found at Ser927 and Ser1235. The residue at position 1241 (Thr1241) is a Phosphothreonine. The interval 1241–1282 (TPNINSVRNADSRGSLISTDSGNSLPERNSEKSNSLDKHQQS) is disordered. Phosphoserine is present on residues Ser1255, Ser1261, and Ser1264. Positions 1255-1267 (SLISTDSGNSLPE) are enriched in polar residues. Residues 1268-1280 (RNSEKSNSLDKHQ) show a composition bias toward basic and acidic residues. In terms of domain architecture, DOCKER spans 1605–2069 (KSYASTPELR…LSEIMHEQLG (465 aa)). The segment at 1693 to 2069 (DEEASMMEDV…LSEIMHEQLG (377 aa)) is interaction with CDC42. Coiled-coil stretches lie at residues 1948-1982 (IEVA…KLQG) and 2034-2067 (NERL…MHEQ).

The protein belongs to the DOCK family. As to quaternary structure, homodimer. Interacts preferentially with nucleotide-depleted CDC42. Widely expressed, with highest expression in heart and placenta. Expressed at intermediate level in kidney, brain, lung and skeletal muscle.

The protein localises to the endomembrane system. Its function is as follows. Guanine nucleotide-exchange factor (GEF) that activates CDC42 by exchanging bound GDP for free GTP. Overexpression induces filopodia formation. This chain is Dedicator of cytokinesis protein 9, found in Homo sapiens (Human).